A 251-amino-acid polypeptide reads, in one-letter code: Cell division protein ZapD (251 aa).

The protein belongs to the ZapD family. As to quaternary structure, interacts with FtsZ.

Its subcellular location is the cytoplasm. Cell division factor that enhances FtsZ-ring assembly. Directly interacts with FtsZ and promotes bundling of FtsZ protofilaments, with a reduction in FtsZ GTPase activity. The chain is Cell division protein ZapD from Azoarcus sp. (strain BH72).